Consider the following 312-residue polypeptide: MELQFLGTGAGQPSKQRNVSSVALKLLDELNEIWLFDVGEATQHQILRTNIRLRKVTKIFISHNHGDHIFGLPGLLSTRSFQGDVGPLTIYGPAGIEDFVKISLKVSRTKISYPIHYVELSEPGLICEDRGFKVYTDRLDHRIPSFGFRVVEDSHPGELLIDKLAEYNIPNGPILGKLKNGEQVALADGTILDGKDFLGPEKPGRIITIIYDTRSTSSIAHLAKDADVLVHESTFAGDESKMAHNYYHSTSVQAAKIARQENVKQLCLNHISARYMGAKAKKLENQAKKVFPNTILVNDFDRVNIPMKGSKK.

Zn(2+) is bound by residues His-63, His-65, Asp-67, His-68, His-141, Asp-212, and His-270. Asp-67 (proton acceptor) is an active-site residue.

The protein belongs to the RNase Z family. Homodimer. The cofactor is Zn(2+).

It carries out the reaction Endonucleolytic cleavage of RNA, removing extra 3' nucleotides from tRNA precursor, generating 3' termini of tRNAs. A 3'-hydroxy group is left at the tRNA terminus and a 5'-phosphoryl group is left at the trailer molecule.. Functionally, zinc phosphodiesterase, which displays some tRNA 3'-processing endonuclease activity. Probably involved in tRNA maturation, by removing a 3'-trailer from precursor tRNA. The chain is Ribonuclease Z from Lactobacillus acidophilus (strain ATCC 700396 / NCK56 / N2 / NCFM).